The chain runs to 880 residues: Endoglucanase E-4 (880 aa).

An N-terminal signal peptide occupies residues 1-46 (MSVTEPPPRRRGRHSRARRFLTSLGATAALTAGMLGVPLATGTAHA). Residue Asp104 is the Nucleophile of the active site. Catalysis depends on residues His422, His427, Asp461, and Glu470. A CBM3 domain is found at 504 to 652 (PDGPEIFVEA…GVPVWGTAPE (149 aa)). Positions 647 to 688 (WGTAPEEGEEPGGGEGPGGGEEPGEDVTPPSAPGSPAVRDVT) are disordered. One can recognise a Fibronectin type-III domain in the interval 678–770 (APGSPAVRDV…TVSFTTLAEN (93 aa)). The region spanning 771 to 880 (GGGPDASCTV…TLNGEPCALA (110 aa)) is the CBM2 domain.

This sequence belongs to the glycosyl hydrolase 9 (cellulase E) family.

It carries out the reaction Endohydrolysis of (1-&gt;4)-beta-D-glucosidic linkages in cellulose, lichenin and cereal beta-D-glucans.. It participates in glycan metabolism; cellulose degradation. This is Endoglucanase E-4 (celD) from Thermobifida fusca (Thermomonospora fusca).